Consider the following 1389-residue polypeptide: DNA-directed RNA polymerase subunit beta'' (1389 aa).

Residues Cys-224, Cys-295, Cys-302, and Cys-305 each contribute to the Zn(2+) site.

It belongs to the RNA polymerase beta' chain family. RpoC2 subfamily. In plastids the minimal PEP RNA polymerase catalytic core is composed of four subunits: alpha, beta, beta', and beta''. When a (nuclear-encoded) sigma factor is associated with the core the holoenzyme is formed, which can initiate transcription. It depends on Zn(2+) as a cofactor.

It localises to the plastid. The protein localises to the chloroplast. The catalysed reaction is RNA(n) + a ribonucleoside 5'-triphosphate = RNA(n+1) + diphosphate. DNA-dependent RNA polymerase catalyzes the transcription of DNA into RNA using the four ribonucleoside triphosphates as substrates. This is DNA-directed RNA polymerase subunit beta'' from Atropa belladonna (Belladonna).